Reading from the N-terminus, the 149-residue chain is GATA transcription factor 15 (149 aa).

Residues 1–10 (MLDPTEKVID) show a composition bias toward basic and acidic residues. 2 disordered regions span residues 1–41 (MLDP…NEKK) and 76–102 (RRTL…GDSL). A GATA-type zinc finger spans residues 37 to 91 (SNEKKSCAICGTSKTPLWRGGPAGPKSLCNACGIRNRKKRRTLISNRSEDKKKKS).

This sequence belongs to the type IV zinc-finger family. Class B subfamily.

The protein localises to the nucleus. Functionally, transcriptional regulator that specifically binds 5'-GATA-3' or 5'-GAT-3' motifs within gene promoters. The protein is GATA transcription factor 15 (GATA15) of Arabidopsis thaliana (Mouse-ear cress).